The chain runs to 179 residues: Large ribosomal subunit protein uL6 (179 aa).

It belongs to the universal ribosomal protein uL6 family. Part of the 50S ribosomal subunit.

This protein binds to the 23S rRNA, and is important in its secondary structure. It is located near the subunit interface in the base of the L7/L12 stalk, and near the tRNA binding site of the peptidyltransferase center. The chain is Large ribosomal subunit protein uL6 from Chlorobium phaeobacteroides (strain DSM 266 / SMG 266 / 2430).